A 180-amino-acid polypeptide reads, in one-letter code: Transcriptional repressor NrdR (180 aa).

The segment at 3–34 (CPRCSKQEIRVLESRSAEGGQSVRRRRECMSC) is a zinc-finger region. Positions 49-139 (IMVIKRDGSR…VYRQFQGIKD (91 aa)) constitute an ATP-cone domain. The disordered stretch occupies residues 155-180 (LERLLQDSSASDSESSGSPDLVGEYS). Residues 160–174 (QDSSASDSESSGSPD) are compositionally biased toward low complexity.

Belongs to the NrdR family. It depends on Zn(2+) as a cofactor.

Negatively regulates transcription of bacterial ribonucleotide reductase nrd genes and operons by binding to NrdR-boxes. This is Transcriptional repressor NrdR from Synechococcus sp. (strain JA-2-3B'a(2-13)) (Cyanobacteria bacterium Yellowstone B-Prime).